A 191-amino-acid chain; its full sequence is UPF0312 protein Sbal_3041 (191 aa).

Residues 1–22 form the signal peptide; sequence MKKQLLSALIGASLLAPMAASA.

Belongs to the UPF0312 family. Type 1 subfamily.

Its subcellular location is the periplasm. The polypeptide is UPF0312 protein Sbal_3041 (Shewanella baltica (strain OS155 / ATCC BAA-1091)).